We begin with the raw amino-acid sequence, 262 residues long: Serine/arginine-rich SC35-like splicing factor SCL30A (262 aa).

Disordered stretches follow at residues 1–38 and 115–262; these read MRGR…LPTS and ENRK…SPSQ. Phosphoserine is present on residues serine 9 and serine 20. Residues 37 to 115 form the RRM domain; it reads TSLLVRNLRH…RELTVVFAEE (79 aa). Residues 115–140 show a composition bias toward basic and acidic residues; that stretch reads ENRKKPTEMRTRDRGGRSNRFQDRRR. A compositionally biased stretch (basic residues) spans 150-161; the sequence is PPRRGRRSRSRS. 4 positions are modified to phosphoserine: serine 166, serine 174, serine 176, and serine 178. Residues 180–190 are compositionally biased toward basic and acidic residues; it reads QDRRYEKERSY. Residues serine 191 and serine 193 each carry the phosphoserine modification. Over residues 209–226 the composition is skewed to basic residues; it reads VKSHSRSPRRSVSPRKNR. The span at 234 to 246 shows a compositional bias: low complexity; sequence RSQSPVPRQSRSP. 3 positions are modified to phosphoserine: serine 235, serine 259, and serine 261.

It belongs to the splicing factor SR family. SCL subfamily. Component of the spliceosome. Interacts with SNRNP35, CYP59 and RS2Z33.

It localises to the nucleus speckle. Its function is as follows. Involved in intron recognition and spliceosome assembly. Binds probably to multiple 5'-GAAG-3' repeats found in its third intron, suggesting autoregulation of alternative splicing. May be necessary for accurate splicing of the 3' region of introns. The sequence is that of Serine/arginine-rich SC35-like splicing factor SCL30A (SCL30A) from Arabidopsis thaliana (Mouse-ear cress).